Here is a 480-residue protein sequence, read N- to C-terminus: DNA repair protein RadA (480 aa).

A C4-type zinc finger spans residues 10-27 (CSECRHVSAKWVGRCLEC). An ATP-binding site is contributed by 95–102 (GDPGVGKS). Residues 254–258 (KNRFG) carry the RadA KNRFG motif motif. The segment at 353-480 (DIYLSTVGGM…TGHVPLGRGT (128 aa)) is lon-protease-like. The disordered stretch occupies residues 459–480 (GTTLATPPSHSGTGHVPLGRGT). The segment covering 461 to 470 (TLATPPSHSG) has biased composition (polar residues).

This sequence belongs to the RecA family. RadA subfamily.

Its function is as follows. DNA-dependent ATPase involved in processing of recombination intermediates, plays a role in repairing DNA breaks. Stimulates the branch migration of RecA-mediated strand transfer reactions, allowing the 3' invading strand to extend heteroduplex DNA faster. Binds ssDNA in the presence of ADP but not other nucleotides, has ATPase activity that is stimulated by ssDNA and various branched DNA structures, but inhibited by SSB. Does not have RecA's homology-searching function. The sequence is that of DNA repair protein RadA from Mycobacterium tuberculosis (strain CDC 1551 / Oshkosh).